Consider the following 179-residue polypeptide: Ribosome maturation factor RimM (179 aa).

The PRC barrel domain maps to 100–176 (KEEFHLLELI…FLIINPPNGL (77 aa)).

The protein belongs to the RimM family. In terms of assembly, binds ribosomal protein uS19.

It localises to the cytoplasm. Functionally, an accessory protein needed during the final step in the assembly of 30S ribosomal subunit, possibly for assembly of the head region. Essential for efficient processing of 16S rRNA. May be needed both before and after RbfA during the maturation of 16S rRNA. It has affinity for free ribosomal 30S subunits but not for 70S ribosomes. This chain is Ribosome maturation factor RimM, found in Prochlorococcus marinus (strain MIT 9312).